Consider the following 363-residue polypeptide: MSHISPIPEILADIKVGKMVIITDAEDRENEGDLLMAAQFVTPEAINFMIKHARGLVCLPMDGEMVEKLGLPMMTQKNGAQYGTNFTVSIEAAHGITTGISAADRALTIQTAVSPTAKPEDIVQPGHIFPLRAQKGGVLVRAGHTEAGVDLAQMNGLIPAAVICEIINDDGTMARMPELMKFAEEHKLKIGTITDLIEYRSRTESLLEDMGNAPVQTPWGEFQQHVYVDKLSGETHLALVKGTPSADTETLVRVHEPFSVMDFIQANPRHSWSLPKALERVQQAESGVVILLHRTEDGASLLDRTLPKGANQAYKWDSKSYGIGAQILAGLNVKKLRVLGQPSSFTGLTGFGLEVVGFEEAEK.

The tract at residues 1-202 is DHBP synthase; that stretch reads MSHISPIPEI…ITDLIEYRSR (202 aa). Residues 28–29, Asp33, 141–145, and Glu165 each bind D-ribulose 5-phosphate; these read RE and RAGHT. Mg(2+) is bound at residue Glu29. Residue His144 participates in Mg(2+) binding. Residues 205–363 form a GTP cyclohydrolase II-like region; the sequence is SLLEDMGNAP…EVVGFEEAEK (159 aa).

In the N-terminal section; belongs to the DHBP synthase family. The protein in the C-terminal section; belongs to the GTP cyclohydrolase II family. Requires Mg(2+) as cofactor. It depends on Mn(2+) as a cofactor.

The catalysed reaction is D-ribulose 5-phosphate = (2S)-2-hydroxy-3-oxobutyl phosphate + formate + H(+). It participates in cofactor biosynthesis; riboflavin biosynthesis; 2-hydroxy-3-oxobutyl phosphate from D-ribulose 5-phosphate: step 1/1. In terms of biological role, catalyzes the conversion of D-ribulose 5-phosphate to formate and 3,4-dihydroxy-2-butanone 4-phosphate. This Neisseria meningitidis serogroup A / serotype 4A (strain DSM 15465 / Z2491) protein is 3,4-dihydroxy-2-butanone 4-phosphate synthase (ribB).